Consider the following 445-residue polypeptide: Chromosome partition protein MukF (445 aa).

Residues 213–241 (LSETSNTLKELQDTLQAAGDELQTQILDI) form a leucine-zipper region.

Belongs to the MukF family. As to quaternary structure, interacts, and probably forms a ternary complex, with MukE and MukB via its C-terminal region. The complex formation is stimulated by calcium or magnesium. It is required for an interaction between MukE and MukB.

The protein localises to the cytoplasm. It localises to the nucleoid. Involved in chromosome condensation, segregation and cell cycle progression. May participate in facilitating chromosome segregation by condensation DNA from both sides of a centrally located replisome during cell division. Not required for mini-F plasmid partitioning. Probably acts via its interaction with MukB and MukE. Overexpression results in anucleate cells. It has a calcium binding activity. The polypeptide is Chromosome partition protein MukF (Vibrio vulnificus (strain CMCP6)).